The following is a 796-amino-acid chain: MKHKLDVTINELRLKSIRKIVKRINTWSDEVKSYSDDVLKQKTLEFKERIASGVDTLDTLLPEAYAVAREASWRVLGMYPKEVQLIGAIVLHEGNIAEMQTGEGKTLTATMPLYLNALSGKGTYLITTNDYLAKRDFEEMQPLYEWLGLTASLGFVDIVDYEYQKGEKRNIYEHDIIYTTNGRLGFDYLIDNLADSAEGKFLPQLNYGIIDEVDSIILDAAQTPLVISGAPRLQSNLFHIVKEFVDTLIEDVHFKMKKTKKEIWLLNQGIEAAQSYFNVEDLYSEQAMVLVRNINLALRAQYLFESNVDYFVYNGDIVLIDRITGRMLPGTKLQAGLHQAIEAKEGMEVSTDKSVMATITFQNLFKLFESFSGMTATGKLGESEFFDLYSKIVVQVPTDKAIQRIDEPDKVFRSVDEKNIAMIHDIVELHETGRPVLLITRTAEAAEYFSKVFFQMDIPNNLLIAQNVAKEAQMIAEAGQIGSMTVATSMAGRGTDIKLGEGVEALGGLAVIIHEHMENSRVDRQLRGRSGRQGDPGSSCIYISLDDYLVKRWSDSNLAENNQLYSLDAQRLSQSSLFNRKVKQIVVKAQRISEEQGVKAREMANEFEKSISIQRDLVYEERNRVLEIDDAENRDFKVLAKDVFEMFVNEEKVLTKSRVVEYIYQNLSFQFNKDVACVNFKDKQAVVTFLLEQFEKQIALNRKNMQSAYYYNIFVQKVFLKAIDSCWLEQVDYLQQLKANVNQRQNGQRNAIFEYHRVALDSFEVMTRNIKKRMVKNICQSMITFDKEGMPVIHFP.

ATP-binding positions include Gln-84, 102 to 106 (GEGKT), and Asp-496.

Belongs to the SecA family. In terms of assembly, monomer and homodimer. Part of the essential Sec protein translocation apparatus which comprises SecA, SecYEG and auxiliary proteins SecDF. Other proteins may also be involved.

Its subcellular location is the cell membrane. It is found in the cytoplasm. It carries out the reaction ATP + H2O + cellular proteinSide 1 = ADP + phosphate + cellular proteinSide 2.. In terms of biological role, part of the Sec protein translocase complex. Interacts with the SecYEG preprotein conducting channel. Has a central role in coupling the hydrolysis of ATP to the transfer of proteins into and across the cell membrane, serving as an ATP-driven molecular motor driving the stepwise translocation of polypeptide chains across the membrane. The polypeptide is Protein translocase subunit SecA 2 (Staphylococcus aureus (strain MRSA252)).